We begin with the raw amino-acid sequence, 318 residues long: MMLWQATPASLWQGRDDSAEAPNALRLFQTIARAERFAPQEMPGDIALLGFACDEGVRRNKGRTGAGHGPEALRRALANMASHQGHDRCVDMGTISVDGEQLEAAHQALREAVAACQRAGKRTLVLGGGHETAFGHGAGVLDAFPGEKVGIINLDAHLDLRFAECASSGTPFRQLALECDAQQRGFHYTCIGVSRAANTQALWDEAARRQVAVVEDLAVLADFDTHVLPELERNIAQYDRLYLTIDLDVLPAREMPAVSAPAALGVPLAILLRIVEPLCRSGKLQAVDLVEFNPQFDIDGQGARAAARLAWQIAHWWR.

The Mn(2+) site is built by His130, Asp155, His157, Asp159, Asp246, and Asp248.

Belongs to the arginase family. Requires Mn(2+) as cofactor.

It catalyses the reaction N-formimidoyl-L-glutamate + H2O = formamide + L-glutamate. The protein operates within amino-acid degradation; L-histidine degradation into L-glutamate; L-glutamate from N-formimidoyl-L-glutamate (hydrolase route): step 1/1. Catalyzes the conversion of N-formimidoyl-L-glutamate to L-glutamate and formamide. The polypeptide is Formimidoylglutamase (Klebsiella pneumoniae (strain 342)).